The chain runs to 457 residues: Bifunctional protein GlmU (457 aa).

Residues 1 to 230 (MSKRYAVVLA…FEESLGVNDR (230 aa)) are pyrophosphorylase. UDP-N-acetyl-alpha-D-glucosamine contacts are provided by residues 9–12 (LAAG), lysine 23, glutamine 73, and 78–79 (GT). Aspartate 103 is a binding site for Mg(2+). UDP-N-acetyl-alpha-D-glucosamine contacts are provided by glycine 140, glutamate 155, asparagine 170, and asparagine 228. Asparagine 228 lines the Mg(2+) pocket. Residues 231–251 (IALAEASRLMQRRINENHMRN) form a linker region. The interval 252 to 457 (GVTLVNPENT…GYAKHLNHGK (206 aa)) is N-acetyltransferase. Residues arginine 333 and lysine 351 each contribute to the UDP-N-acetyl-alpha-D-glucosamine site. The Proton acceptor role is filled by histidine 363. UDP-N-acetyl-alpha-D-glucosamine-binding residues include tyrosine 366 and asparagine 377. Residues 386-387 (NY), alanine 423, and arginine 440 each bind acetyl-CoA.

The protein in the N-terminal section; belongs to the N-acetylglucosamine-1-phosphate uridyltransferase family. This sequence in the C-terminal section; belongs to the transferase hexapeptide repeat family. In terms of assembly, homotrimer. It depends on Mg(2+) as a cofactor.

The protein resides in the cytoplasm. The catalysed reaction is alpha-D-glucosamine 1-phosphate + acetyl-CoA = N-acetyl-alpha-D-glucosamine 1-phosphate + CoA + H(+). It catalyses the reaction N-acetyl-alpha-D-glucosamine 1-phosphate + UTP + H(+) = UDP-N-acetyl-alpha-D-glucosamine + diphosphate. Its pathway is nucleotide-sugar biosynthesis; UDP-N-acetyl-alpha-D-glucosamine biosynthesis; N-acetyl-alpha-D-glucosamine 1-phosphate from alpha-D-glucosamine 6-phosphate (route II): step 2/2. The protein operates within nucleotide-sugar biosynthesis; UDP-N-acetyl-alpha-D-glucosamine biosynthesis; UDP-N-acetyl-alpha-D-glucosamine from N-acetyl-alpha-D-glucosamine 1-phosphate: step 1/1. It functions in the pathway bacterial outer membrane biogenesis; LPS lipid A biosynthesis. In terms of biological role, catalyzes the last two sequential reactions in the de novo biosynthetic pathway for UDP-N-acetylglucosamine (UDP-GlcNAc). The C-terminal domain catalyzes the transfer of acetyl group from acetyl coenzyme A to glucosamine-1-phosphate (GlcN-1-P) to produce N-acetylglucosamine-1-phosphate (GlcNAc-1-P), which is converted into UDP-GlcNAc by the transfer of uridine 5-monophosphate (from uridine 5-triphosphate), a reaction catalyzed by the N-terminal domain. This Listeria monocytogenes serotype 4b (strain F2365) protein is Bifunctional protein GlmU.